A 400-amino-acid polypeptide reads, in one-letter code: Nicotinate phosphoribosyltransferase (400 aa).

H220 is subject to Phosphohistidine; by autocatalysis.

It belongs to the NAPRTase family. Transiently phosphorylated on a His residue during the reaction cycle. Phosphorylation strongly increases the affinity for substrates and increases the rate of nicotinate D-ribonucleotide production. Dephosphorylation regenerates the low-affinity form of the enzyme, leading to product release.

It catalyses the reaction nicotinate + 5-phospho-alpha-D-ribose 1-diphosphate + ATP + H2O = nicotinate beta-D-ribonucleotide + ADP + phosphate + diphosphate. It participates in cofactor biosynthesis; NAD(+) biosynthesis; nicotinate D-ribonucleotide from nicotinate: step 1/1. Its function is as follows. Catalyzes the synthesis of beta-nicotinate D-ribonucleotide from nicotinate and 5-phospho-D-ribose 1-phosphate at the expense of ATP. The sequence is that of Nicotinate phosphoribosyltransferase from Escherichia coli O157:H7.